The chain runs to 247 residues: DNA repair protein RecO (247 aa).

Belongs to the RecO family.

Its function is as follows. Involved in DNA repair and RecF pathway recombination. This Methylocella silvestris (strain DSM 15510 / CIP 108128 / LMG 27833 / NCIMB 13906 / BL2) protein is DNA repair protein RecO.